The sequence spans 227 residues: Cytochrome c oxidase subunit 2 (227 aa).

Residues 1 to 14 are Mitochondrial intermembrane-facing; sequence MAYPLQMGLQDATS. A helical transmembrane segment spans residues 15-45; the sequence is PIMEELLHFHDHTLMIVFLISSLVLYIISLM. Residues 46–59 lie on the Mitochondrial matrix side of the membrane; the sequence is LTTKLTHTSTMDAQ. A helical membrane pass occupies residues 60-87; it reads EVETVWTILPAIILILIALPSLRILYMM. Residues 88–227 lie on the Mitochondrial intermembrane side of the membrane; that stretch reads DEINNPSLTV…HFEKWSTSML (140 aa). Residues histidine 161, cysteine 196, glutamate 198, cysteine 200, histidine 204, and methionine 207 each coordinate Cu cation. Residue glutamate 198 coordinates Mg(2+).

Belongs to the cytochrome c oxidase subunit 2 family. As to quaternary structure, component of the cytochrome c oxidase (complex IV, CIV), a multisubunit enzyme composed of 14 subunits. The complex is composed of a catalytic core of 3 subunits MT-CO1, MT-CO2 and MT-CO3, encoded in the mitochondrial DNA, and 11 supernumerary subunits COX4I, COX5A, COX5B, COX6A, COX6B, COX6C, COX7A, COX7B, COX7C, COX8 and NDUFA4, which are encoded in the nuclear genome. The complex exists as a monomer or a dimer and forms supercomplexes (SCs) in the inner mitochondrial membrane with NADH-ubiquinone oxidoreductase (complex I, CI) and ubiquinol-cytochrome c oxidoreductase (cytochrome b-c1 complex, complex III, CIII), resulting in different assemblies (supercomplex SCI(1)III(2)IV(1) and megacomplex MCI(2)III(2)IV(2)). Found in a complex with TMEM177, COA6, COX18, COX20, SCO1 and SCO2. Interacts with TMEM177 in a COX20-dependent manner. Interacts with COX20. Interacts with COX16. It depends on Cu cation as a cofactor.

The protein resides in the mitochondrion inner membrane. It catalyses the reaction 4 Fe(II)-[cytochrome c] + O2 + 8 H(+)(in) = 4 Fe(III)-[cytochrome c] + 2 H2O + 4 H(+)(out). In terms of biological role, component of the cytochrome c oxidase, the last enzyme in the mitochondrial electron transport chain which drives oxidative phosphorylation. The respiratory chain contains 3 multisubunit complexes succinate dehydrogenase (complex II, CII), ubiquinol-cytochrome c oxidoreductase (cytochrome b-c1 complex, complex III, CIII) and cytochrome c oxidase (complex IV, CIV), that cooperate to transfer electrons derived from NADH and succinate to molecular oxygen, creating an electrochemical gradient over the inner membrane that drives transmembrane transport and the ATP synthase. Cytochrome c oxidase is the component of the respiratory chain that catalyzes the reduction of oxygen to water. Electrons originating from reduced cytochrome c in the intermembrane space (IMS) are transferred via the dinuclear copper A center (CU(A)) of subunit 2 and heme A of subunit 1 to the active site in subunit 1, a binuclear center (BNC) formed by heme A3 and copper B (CU(B)). The BNC reduces molecular oxygen to 2 water molecules using 4 electrons from cytochrome c in the IMS and 4 protons from the mitochondrial matrix. In Phoca vitulina (Harbor seal), this protein is Cytochrome c oxidase subunit 2 (MT-CO2).